A 446-amino-acid polypeptide reads, in one-letter code: ATP synthase subunit b-delta (446 aa).

The ATP synthase subunit b stretch occupies residues 1 to 168 (MSTFIGQLFG…PATADVDYPL (168 aa)). The helical transmembrane segment at 4 to 24 (FIGQLFGFAVIVYLVWRFIVP) threads the bilayer. Positions 169–446 (LAKMRSASRR…LAAAEARLPD (278 aa)) are ATP synthase subunit delta.

This sequence in the N-terminal section; belongs to the ATPase B chain family. It in the C-terminal section; belongs to the ATPase delta chain family. As to quaternary structure, F-type ATPases have 2 components, F(1) - the catalytic core - and F(0) - the membrane proton channel. F(1) has five subunits: alpha(3), beta(3), gamma(1), delta(1), epsilon(1). F(0) has three main subunits: a(1), b(2) and c(10-14). The alpha and beta chains form an alternating ring which encloses part of the gamma chain. F(1) is attached to F(0) by a central stalk formed by the gamma and epsilon chains, while a peripheral stalk is formed by the delta and b chains.

It is found in the cell membrane. In terms of biological role, f(1)F(0) ATP synthase produces ATP from ADP in the presence of a proton or sodium gradient. F-type ATPases consist of two structural domains, F(1) containing the extramembraneous catalytic core and F(0) containing the membrane proton channel, linked together by a central stalk and a peripheral stalk. During catalysis, ATP synthesis in the catalytic domain of F(1) is coupled via a rotary mechanism of the central stalk subunits to proton translocation. This fusion protein includes a component of the F(0) channel (subunit b) and of the F(1) subunit (subunit delta). Two copies of subunit b and one of delta together form the peripheral 'stator' stalk which links F(1) to F(0). This chain is ATP synthase subunit b-delta (atpFH), found in Mycobacterium tuberculosis (strain CDC 1551 / Oshkosh).